The chain runs to 269 residues: Phosphatidylglycerol--prolipoprotein diacylglyceryl transferase (269 aa).

Helical transmembrane passes span 14–34, 49–69, 89–109, and 118–138; these read IVQI…AGII, VAPE…IPMA, VFAI…GLLA, and GYSL…GQAI. A 1,2-diacyl-sn-glycero-3-phospho-(1'-sn-glycerol) is bound at residue Arg-140. 3 consecutive transmembrane segments (helical) span residues 180–200, 208–228, and 240–260; these read TFLY…FVFF, GSIA…IEGL, and TAQL…WWLN.

The protein belongs to the Lgt family.

The protein resides in the cell inner membrane. The catalysed reaction is L-cysteinyl-[prolipoprotein] + a 1,2-diacyl-sn-glycero-3-phospho-(1'-sn-glycerol) = an S-1,2-diacyl-sn-glyceryl-L-cysteinyl-[prolipoprotein] + sn-glycerol 1-phosphate + H(+). Its pathway is protein modification; lipoprotein biosynthesis (diacylglyceryl transfer). Catalyzes the transfer of the diacylglyceryl group from phosphatidylglycerol to the sulfhydryl group of the N-terminal cysteine of a prolipoprotein, the first step in the formation of mature lipoproteins. This Gloeobacter violaceus (strain ATCC 29082 / PCC 7421) protein is Phosphatidylglycerol--prolipoprotein diacylglyceryl transferase.